The following is a 49-amino-acid chain: Large ribosomal subunit protein bL32 (49 aa).

This sequence belongs to the bacterial ribosomal protein bL32 family.

In Nitratiruptor sp. (strain SB155-2), this protein is Large ribosomal subunit protein bL32.